The following is an 887-amino-acid chain: Golgin IMH1 (887 aa).

Disordered regions lie at residues 16 to 50, 142 to 214, 240 to 301, and 783 to 822; these read LAKG…EELP, QESL…MKSQ, GASQ…SAGD, and LKMS…SISS. 2 stretches are compositionally biased toward basic and acidic residues: residues 37 to 50 and 145 to 210; these read GRRE…EELP and LEQR…HAAE. The stretch at 118–241 forms a coiled coil; the sequence is AMLTEEIKRI…YKSTIQELGA (124 aa). Over residues 240 to 254 the composition is skewed to polar residues; it reads GASQATGEAQPSSEA. The span at 258–273 shows a compositional bias: basic residues; the sequence is RGKKGKGKRGKGKKRV. The stretch at 299–788 forms a coiled coil; it reads AGDEIIEAIE…LSTQLKMSKD (490 aa). A compositionally biased stretch (low complexity) spans 788-807; sequence DMSSQSRHSSRSGSLVSPSS. The segment covering 808 to 822 has biased composition (polar residues); it reads DNETGNSPRKISISS. The region spanning 837–885 is the GRIP domain; the sequence is EMESNEKLAYIRNVLLGFLEHREQRSQLLPVVSTLLQLSSHDEKRLLTS.

The protein localises to the cytoplasm. Its subcellular location is the golgi apparatus membrane. Functionally, involved in vesicular transport between an endosomal compartment and the Golgi apparatus. In Eremothecium gossypii (strain ATCC 10895 / CBS 109.51 / FGSC 9923 / NRRL Y-1056) (Yeast), this protein is Golgin IMH1 (IMH1).